The following is a 1893-amino-acid chain: Serine-aspartate repeat-containing protein I (1893 aa).

The N-terminal stretch at 1-54 is a signal peptide; the sequence is MNFKGVKLLKNSKKRLDFLPNTLNKYSIRKFTVGTASILVGATLFLGVSNEAEA. The segment at 53 to 333 is disordered; the sequence is EAAEKIDSPT…AHGINNKNKQ (281 aa). Residues 54–222 are compositionally biased toward basic and acidic residues; it reads AAEKIDSPTK…AEEPATKEEA (169 aa). 21 repeat units span residues 72–83, 84–95, 96–107, 108–119, 120–131, 132–143, 144–155, 156–167, 168–179, 180–191, 192–203, 204–215, 216–227, 228–239, 240–251, 252–263, 264–275, 276–287, 288–299, 300–311, and 312–323. The segment at 72 to 323 is 21 X 12 AA tandem repeat of [AP]-[AE]-T-K-E-[EK]-A-[AV]-[IT]-[AST]-E-E; it reads AATKEEAATT…TKEKAVTSEE (252 aa). Residues 240 to 284 show a composition bias toward basic and acidic residues; that stretch reads PATKEEAAIAEEAATKEKAVTSEEAATKEKAAIAEEAATKEKAAI. Over residues 286-302 the composition is skewed to acidic residues; that stretch reads EEPETKEEAATTEEPET. Basic and acidic residues predominate over residues 312–325; the sequence is PATKEKAVTSEEAH. A ligand binding A region region spans residues 324–755; sequence AHGINNKNKQ…GSSTAQGDNP (432 aa). 2 CNA-B domains span residues 756–874 and 875–984; these read TYNL…YETP and KYSL…YFDE. Positions 941 to 1867 are disordered; that stretch reads KPEGLTQTTT…GNNTQNNGTL (927 aa). The span at 955–975 shows a compositional bias: basic and acidic residues; the sequence is DENKDADGEEVHVTITDHDDF. Positions 981-1836 are enriched in acidic residues; it reads YFDEDSDADA…DSDADADADS (856 aa). A compositionally biased stretch (basic and acidic residues) spans 1837–1851; the sequence is DADKYHNDTADKSND. The LPXTG sorting signal signature appears at 1854 to 1858; that stretch reads LPDTG. T1857 bears the Pentaglycyl murein peptidoglycan amidated threonine mark. Positions 1858 to 1893 are cleaved as a propeptide — removed by sortase; the sequence is GNNTQNNGTLFGSLFAALGGLFLVGSRRKNKNNEEK.

The protein belongs to the serine-aspartate repeat-containing protein (SDr) family.

Its subcellular location is the secreted. The protein localises to the cell wall. Functionally, responsible for collagen binding by S.saprophyticus. The chain is Serine-aspartate repeat-containing protein I (sdrI) from Staphylococcus saprophyticus.